Reading from the N-terminus, the 307-residue chain is MIILSGGTGTPKLLDGLKEILPLEELTVVVNTAEDLWVSGNLISPDLDTVLYLFSDQIDRKKWWGIENDTFRTYERMHELGIEESMKLGDRDRATHIIRSNLIRGGTSLTEATVKLASLFGIDANILPMSDDPVSTYVETLQGVMHFQDFWVGKHGDPDVLGVDIRGVSEASVAKKVLEAFEKDDNVLIGPSNPITSIGPIISLPGMRELLKRKKVIAVSPIIGNAPVSGPAGKLMQACGLEVSSMGVAEYYQEFLDVFVFDERDRADEFAFERLGCRASRADTLMTSTEKSRELAEFVVGLFDTVC.

7,8-didemethyl-8-hydroxy-5-deazariboflavin contacts are provided by Asp-48 and Lys-87.

It belongs to the CofD family. In terms of assembly, homodimer. Mg(2+) serves as cofactor.

The enzyme catalyses (2S)-lactyl-2-diphospho-5'-guanosine + 7,8-didemethyl-8-hydroxy-5-deazariboflavin = oxidized coenzyme F420-0 + GMP + H(+). It functions in the pathway cofactor biosynthesis; coenzyme F420 biosynthesis. In terms of biological role, catalyzes the transfer of the 2-phospholactate moiety from (2S)-lactyl-2-diphospho-5'-guanosine to 7,8-didemethyl-8-hydroxy-5-deazariboflavin (FO) with the formation of oxidized coenzyme F420-0 and GMP. This is 2-phospho-L-lactate transferase from Methanosarcina acetivorans (strain ATCC 35395 / DSM 2834 / JCM 12185 / C2A).